The chain runs to 253 residues: Chitooligosaccharide deacetylase (253 aa).

2 residues coordinate Mg(2+): H61 and H125.

Belongs to the YdjC deacetylase family. ChbG subfamily. As to quaternary structure, homodimer. It depends on Mg(2+) as a cofactor.

The protein resides in the cytoplasm. The catalysed reaction is N,N'-diacetylchitobiose + H2O = N-acetyl-beta-D-glucosaminyl-(1-&gt;4)-D-glucosamine + acetate. It carries out the reaction diacetylchitobiose-6'-phosphate + H2O = N'-monoacetylchitobiose-6'-phosphate + acetate. Its pathway is glycan degradation; chitin degradation. Functionally, involved in the degradation of chitin. ChbG is essential for growth on the acetylated chitooligosaccharides chitobiose and chitotriose but is dispensable for growth on cellobiose and chitosan dimer, the deacetylated form of chitobiose. Deacetylation of chitobiose-6-P and chitotriose-6-P is necessary for both the activation of the chb promoter by the regulatory protein ChbR and the hydrolysis of phosphorylated beta-glucosides by the phospho-beta-glucosidase ChbF. Catalyzes the removal of only one acetyl group from chitobiose-6-P to yield monoacetylchitobiose-6-P, the inducer of ChbR and the substrate of ChbF. The polypeptide is Chitooligosaccharide deacetylase (Proteus mirabilis (strain HI4320)).